Here is a 377-residue protein sequence, read N- to C-terminus: Cytochrome c peroxidase, mitochondrial (377 aa).

Residues methionine 1–phenylalanine 32 constitute a mitochondrion transit peptide. The active-site Proton acceptor is the histidine 138. Histidine 261 contributes to the heme b binding site. Tryptophan 277 serves as the catalytic Tryptophan radical intermediate.

Belongs to the peroxidase family. Cytochrome c peroxidase subfamily. Forms a one-to-one complex with cytochrome c. Interacts with MID1 (via C-terminus); the interaction may contribute to cellular detoxification of radicals. Heme b is required as a cofactor.

It is found in the mitochondrion matrix. It localises to the mitochondrion intermembrane space. It carries out the reaction 2 Fe(II)-[cytochrome c] + H2O2 + 2 H(+) = 2 Fe(III)-[cytochrome c] + 2 H2O. Its function is as follows. Destroys radicals which are normally produced within the cells and which are toxic to biological systems. The polypeptide is Cytochrome c peroxidase, mitochondrial (CCP1) (Cryptococcus neoformans var. grubii serotype A (strain H99 / ATCC 208821 / CBS 10515 / FGSC 9487) (Filobasidiella neoformans var. grubii)).